The following is a 134-amino-acid chain: Small ribosomal subunit protein uS9c (134 aa).

It belongs to the universal ribosomal protein uS9 family.

It localises to the plastid. It is found in the chloroplast. The chain is Small ribosomal subunit protein uS9c (rps9) from Euglena gracilis.